The sequence spans 182 residues: Small ribosomal subunit protein uS5 (182 aa).

The S5 DRBM domain maps to 16–79; the sequence is FVDRLVHINR…EAAKRGMIYV (64 aa).

Belongs to the universal ribosomal protein uS5 family. Part of the 30S ribosomal subunit. Contacts proteins S4 and S8.

Its function is as follows. With S4 and S12 plays an important role in translational accuracy. In terms of biological role, located at the back of the 30S subunit body where it stabilizes the conformation of the head with respect to the body. This is Small ribosomal subunit protein uS5 from Bartonella quintana (strain Toulouse) (Rochalimaea quintana).